A 496-amino-acid polypeptide reads, in one-letter code: Glycylpeptide N-tetradecanoyltransferase 1 (496 aa).

The segment at 1–81 (MADESETAVK…DSTQDQPVKM (81 aa)) is disordered. Ser-31 and Ser-47 each carry phosphoserine. Basic residues predominate over residues 55–66 (KKKKKKQKKKKE). At Ser-83 the chain carries Phosphoserine. Tetradecanoyl-CoA contacts are provided by Gln-118, Phe-119, Trp-120, Phe-247, Leu-248, Cys-249, Val-250, Ser-256, Arg-258, Val-259, and Ala-260.

Belongs to the NMT family.

It localises to the cytoplasm. The protein resides in the cytosol. It is found in the membrane. The enzyme catalyses N-terminal glycyl-[protein] + tetradecanoyl-CoA = N-tetradecanoylglycyl-[protein] + CoA + H(+). It catalyses the reaction N-terminal glycyl-L-lysyl-[protein] + tetradecanoyl-CoA = N-terminal glycyl-(N(6)-tetradecanoyl)-L-lysyl-[protein] + CoA + H(+). Functionally, adds a myristoyl group to the N-terminal glycine residue of certain cellular and viral proteins. Also able to mediate N-terminal lysine myristoylation of proteins: catalyzes myristoylation of ARF6 on both 'Gly-2' and 'Lys-3'. Lysine myristoylation is required to maintain ARF6 on membranes during the GTPase cycle. The protein is Glycylpeptide N-tetradecanoyltransferase 1 (Nmt1) of Rattus norvegicus (Rat).